Consider the following 217-residue polypeptide: Large ribosomal subunit protein uL3 (217 aa).

This sequence belongs to the universal ribosomal protein uL3 family. In terms of assembly, part of the 50S ribosomal subunit. Forms a cluster with proteins L14 and L19.

One of the primary rRNA binding proteins, it binds directly near the 3'-end of the 23S rRNA, where it nucleates assembly of the 50S subunit. This is Large ribosomal subunit protein uL3 from Mycobacterium bovis (strain ATCC BAA-935 / AF2122/97).